Consider the following 181-residue polypeptide: Dual-action ribosomal maturation protein DarP (181 aa).

Residues 1 to 24 form a disordered region; that stretch reads MTGIKRPMSQYQDDNEWEDWGPSK.

Belongs to the DarP family.

Its subcellular location is the cytoplasm. In terms of biological role, member of a network of 50S ribosomal subunit biogenesis factors which assembles along the 30S-50S interface, preventing incorrect 23S rRNA structures from forming. Promotes peptidyl transferase center (PTC) maturation. The sequence is that of Dual-action ribosomal maturation protein DarP from Aeromonas hydrophila subsp. hydrophila (strain ATCC 7966 / DSM 30187 / BCRC 13018 / CCUG 14551 / JCM 1027 / KCTC 2358 / NCIMB 9240 / NCTC 8049).